Reading from the N-terminus, the 223-residue chain is 7-cyano-7-deazaguanine synthase (223 aa).

Residue Phe-15–Leu-25 coordinates ATP. Zn(2+) is bound by residues Cys-191, Cys-200, Cys-203, and Cys-206.

The protein belongs to the QueC family. As to quaternary structure, homodimer. Zn(2+) serves as cofactor.

It carries out the reaction 7-carboxy-7-deazaguanine + NH4(+) + ATP = 7-cyano-7-deazaguanine + ADP + phosphate + H2O + H(+). Its pathway is purine metabolism; 7-cyano-7-deazaguanine biosynthesis. Functionally, catalyzes the ATP-dependent conversion of 7-carboxy-7-deazaguanine (CDG) to 7-cyano-7-deazaguanine (preQ(0)). This chain is 7-cyano-7-deazaguanine synthase, found in Staphylococcus haemolyticus (strain JCSC1435).